The primary structure comprises 966 residues: Regulator of G-protein signaling 3 (966 aa).

The PDZ domain maps to 18 to 95; the sequence is QITIRRGKDG…EIILLVWRVV (78 aa). Positions 115-135 are disordered; that stretch reads THDLLSPPNKREKNCTHGAPV. An Omega-N-methylarginine modification is found at Arg167. Disordered stretches follow at residues 403-618 and 637-704; these read EADE…TGAV and YSQL…RVQN. Composition is skewed to polar residues over residues 527 to 548 and 576 to 594; these read PETSTSKDSPPGQGSSPTTELP and SSASVQKRLPSQESPSSLG. The segment covering 649–675 has biased composition (acidic residues); it reads GEDEDAEEGEEGGEGEEDEEDDTSDDN. Positions 676-686 are enriched in basic and acidic residues; the sequence is YGDRSEAKRSS. Phosphoserine occurs at positions 712, 715, 747, and 776. The segment at 806–830 is disordered; that stretch reads FRRRNESPGAQPASKTDKTTKSFKP. A compositionally biased stretch (basic and acidic residues) spans 820 to 830; sequence KTDKTTKSFKP. One can recognise an RGS domain in the interval 841–966; it reads SLEKLLLHKY…INQKKMSPPL (126 aa).

In terms of assembly, binds the GNB1-GNG2 heterodimer. Binds EFNB1 and EFNB2. Phosphorylated by cyclic GMP-dependent protein kinase. In terms of processing, ISGylated. Detected in embryos from E8.5-16.5 in cortical ventricular zone, dorsal root ganglia and cerebellar primordia. Isoform 3 is detected in testis and in spermatocytes from newborn mice. Levels increase and reach a maximum after 21 days; after this they decrease again. Long isoforms are widely expressed.

The protein resides in the cytoplasm. Its subcellular location is the cell membrane. The protein localises to the nucleus. In terms of biological role, down-regulates signaling from heterotrimeric G-proteins by increasing the GTPase activity of the alpha subunits, thereby driving them into their inactive GDP-bound form. Down-regulates G-protein-mediated release of inositol phosphates and activation of MAP kinases. This chain is Regulator of G-protein signaling 3 (Rgs3), found in Mus musculus (Mouse).